A 512-amino-acid polypeptide reads, in one-letter code: Methionine--tRNA ligase (512 aa).

The 'HIGH' region motif lies at 12–22; that stretch reads YYVNDVPHIGH. The 'KMSKS' region motif lies at 295–299; the sequence is KISKS. Lys298 serves as a coordination point for ATP.

Belongs to the class-I aminoacyl-tRNA synthetase family. MetG type 2B subfamily. In terms of assembly, monomer.

The protein localises to the cytoplasm. The enzyme catalyses tRNA(Met) + L-methionine + ATP = L-methionyl-tRNA(Met) + AMP + diphosphate. Functionally, is required not only for elongation of protein synthesis but also for the initiation of all mRNA translation through initiator tRNA(fMet) aminoacylation. This is Methionine--tRNA ligase from Rickettsia felis (strain ATCC VR-1525 / URRWXCal2) (Rickettsia azadi).